The sequence spans 398 residues: Acetate kinase (398 aa).

Asn-9 contacts Mg(2+). Residue Lys-16 coordinates ATP. Position 93 (Arg-93) interacts with substrate. The active-site Proton donor/acceptor is Asp-150. Residues 209–213 (HLGAG), 284–286 (DMR), and 329–333 (GIGEH) each bind ATP. Glu-382 contributes to the Mg(2+) binding site.

Belongs to the acetokinase family. In terms of assembly, homodimer. The cofactor is Mg(2+). It depends on Mn(2+) as a cofactor.

It is found in the cytoplasm. The catalysed reaction is acetate + ATP = acetyl phosphate + ADP. It functions in the pathway metabolic intermediate biosynthesis; acetyl-CoA biosynthesis; acetyl-CoA from acetate: step 1/2. Functionally, catalyzes the formation of acetyl phosphate from acetate and ATP. Can also catalyze the reverse reaction. The protein is Acetate kinase of Rhodopseudomonas palustris (strain ATCC BAA-98 / CGA009).